Here is a 131-residue protein sequence, read N- to C-terminus: Profilin (131 aa).

It belongs to the profilin family. As to quaternary structure, occurs in many kinds of cells as a complex with monomeric actin in a 1:1 ratio.

Its subcellular location is the cytoplasm. The protein resides in the cytoskeleton. Functionally, binds to actin and affects the structure of the cytoskeleton. At high concentrations, profilin prevents the polymerization of actin, whereas it enhances it at low concentrations. By binding to PIP2, it inhibits the formation of IP3 and DG. In Litchi chinensis (Lychee), this protein is Profilin.